A 237-amino-acid polypeptide reads, in one-letter code: Urease subunit alpha (237 aa).

The interval 1–102 is urease gamma; sequence MKLTPKELDK…LVTIHTPVED (102 aa). Positions 103–237 are urease beta; sequence NGKLAPGEVF…CGCEATKDKQ (135 aa).

This sequence in the N-terminal section; belongs to the urease gamma subunit family. The protein in the C-terminal section; belongs to the urease beta subunit family. As to quaternary structure, heterohexamer of 3 UreA (alpha) and 3 UreB (beta) subunits.

It is found in the cytoplasm. The enzyme catalyses urea + 2 H2O + H(+) = hydrogencarbonate + 2 NH4(+). Its pathway is nitrogen metabolism; urea degradation; CO(2) and NH(3) from urea (urease route): step 1/1. This Helicobacter felis protein is Urease subunit alpha.